The following is a 327-amino-acid chain: uncharacterized protein (327 aa).

A run of 4 helical transmembrane segments spans residues 68–88 (SIPA…LFYP), 92–112 (FLHL…VDIF), 127–147 (WVAL…HLAA), and 148–168 (IAIW…YIIL).

The protein resides in the cell membrane. Its function is as follows. May act as a negative regulator for the transcription of mutY, fabL, sspE and yfhP. This is an uncharacterized protein from Bacillus subtilis (strain 168).